The following is a 366-amino-acid chain: Chorismate synthase (366 aa).

Arg48 is an NADP(+) binding site. FMN is bound by residues 125-127 (RSS), 241-242 (NA), Gly285, 300-304 (KPTSS), and Arg326.

It belongs to the chorismate synthase family. As to quaternary structure, homotetramer. FMNH2 serves as cofactor.

It catalyses the reaction 5-O-(1-carboxyvinyl)-3-phosphoshikimate = chorismate + phosphate. It functions in the pathway metabolic intermediate biosynthesis; chorismate biosynthesis; chorismate from D-erythrose 4-phosphate and phosphoenolpyruvate: step 7/7. In terms of biological role, catalyzes the anti-1,4-elimination of the C-3 phosphate and the C-6 proR hydrogen from 5-enolpyruvylshikimate-3-phosphate (EPSP) to yield chorismate, which is the branch point compound that serves as the starting substrate for the three terminal pathways of aromatic amino acid biosynthesis. This reaction introduces a second double bond into the aromatic ring system. In Paracoccus denitrificans (strain Pd 1222), this protein is Chorismate synthase.